The sequence spans 1751 residues: Non-reducing polyketide synthase afvB (1751 aa).

The N-terminal acylcarrier protein transacylase domain (SAT) stretch occupies residues 19 to 249; that stretch reads FRRLRLHSKC…PLPVYGGPCH (231 aa). Residues 381–811 form the Ketosynthase family 3 (KS3) domain; the sequence is HEKIAVIGMS…GGNTSLLLEE (431 aa). Catalysis depends on for beta-ketoacyl synthase activity residues cysteine 554, histidine 689, and histidine 730. A malonyl-CoA:ACP transacylase (MAT) domain region spans residues 910–1228; it reads FVFSGQGSFS…SMSALHSAGV (319 aa). Residues 1291-1607 form a product template (PT) domain region; it reads TALVHHILEE…PRILMSRFFD (317 aa). Positions 1295-1429 are N-terminal hotdog fold; sequence HHILEESFGK…GVVTCGDSHS (135 aa). Positions 1295-1603 constitute a PKS/mFAS DH domain; sequence HHILEESFGK…LRPLPRILMS (309 aa). Histidine 1327 (proton acceptor; for dehydratase activity) is an active-site residue. The segment at 1456–1603 is C-terminal hotdog fold; it reads LASRVSKDLV…LRPLPRILMS (148 aa). Aspartate 1514 acts as the Proton donor; for dehydratase activity in catalysis. The disordered stretch occupies residues 1610 to 1670; that stretch reads DSQYGQMAQQ…KAPISGSWPN (61 aa). Residues 1612–1657 show a composition bias toward polar residues; sequence QYGQMAQQEPSTALPSTPQHTSSAKTTESTPSQQDESDNTSLATPE. Residues 1670 to 1747 form the Carrier domain; sequence NANSQLVRDA…DLKAYLEGNQ (78 aa). Serine 1707 is subject to O-(pantetheine 4'-phosphoryl)serine.

It depends on pantetheine 4'-phosphate as a cofactor. Expressed mainly in sclerotia, with expression levels 20-fold and 10-fold greater than the expression levels of this gene found in mycelium and conidia, respectively.

The protein operates within secondary metabolite biosynthesis. Its function is as follows. Non-reducing polyketide synthase (NRPKS); part of the gene cluster that mediates the biosynthesis of aflavarin, a bicoumarin that exhibits anti-insectan activity against the fungivorous beetle C.hemipterus. Catalyzes the formation of the aromatic polyketide from acetyl coenzyme A and seven malonyl coenzyme A molecules. This chain is Non-reducing polyketide synthase afvB, found in Aspergillus flavus (strain ATCC 200026 / FGSC A1120 / IAM 13836 / NRRL 3357 / JCM 12722 / SRRC 167).